Here is a 74-residue protein sequence, read N- to C-terminus: uncharacterized protein (74 aa).

A helical transmembrane segment spans residues 52–72 (ITFGFTVLGLGIGMIFGDAGL).

The protein resides in the membrane. This is an uncharacterized protein from Methanocaldococcus jannaschii (strain ATCC 43067 / DSM 2661 / JAL-1 / JCM 10045 / NBRC 100440) (Methanococcus jannaschii).